We begin with the raw amino-acid sequence, 512 residues long: Vacuolar protein sorting-associated protein 30 (512 aa).

Positions Thr-294 to Leu-511 are BARA.

Belongs to the beclin family. In terms of assembly, component of the autophagy-specific VPS34 PI3-kinase complex I composed of VPS15, VPS30, VPS34, ATG14 and ATG38; and of the VPS34 PI3-kinase complex II composed of VPS15, VPS30, VPS34 and VPS38.

It localises to the endosome membrane. Its subcellular location is the vacuole membrane. It is found in the preautophagosomal structure membrane. Functionally, required for cytoplasm to vacuole transport (Cvt), autophagy, nucleophagy, and mitophagy, as a part of the autophagy-specific VPS34 PI3-kinase complex I. This complex is essential to recruit the ATG8-phosphatidylinositol conjugate and the ATG12-ATG5 conjugate to the pre-autophagosomal structure. Also involved in endosome-to-Golgi retrograde transport as part of the VPS34 PI3-kinase complex II. This second complex is required for the endosome-to-Golgi retrieval of PEP1 and KEX2, and the recruitment of VPS5 and VPS7, two components of the retromer complex, to endosomal membranes (probably through the synthesis of a specific pool of phosphatidylinositol 3-phosphate recruiting the retromer to the endosomes). Required for survival and/or proliferation in kidneys but not brain. This chain is Vacuolar protein sorting-associated protein 30, found in Candida glabrata (strain ATCC 2001 / BCRC 20586 / JCM 3761 / NBRC 0622 / NRRL Y-65 / CBS 138) (Yeast).